The primary structure comprises 216 residues: MLPATEAAKIYQTNYVRNSRAIGVLWAIFTTLFAIVNVVCFVQPYWIGDGMDTPQAGYFGLFHYCIGSGMSRDLTCQGSFTEFGSIPSSAFKAASFFIGMSMVLVLSCIGCFALFFFCSTATVYKICGWMQLAAGTCLVLGCMIYPDGWDADEVKRMCGEGTDKYTIGACSVRWAYILAIMGILDALILSFLAFVLGNRQDGLMSEELLGDKSGNA.

4 helical membrane passes run 22-42, 96-116, 126-146, and 177-197; these read IGVL…VCFV, FFIG…ALFF, ICGW…MIYP, and ILAI…FVLG.

This sequence belongs to the LHFP family.

Its subcellular location is the membrane. The protein is LHFPL tetraspan subfamily member 3 protein of Danio rerio (Zebrafish).